Consider the following 397-residue polypeptide: Elongation factor Tu (397 aa).

The 197-residue stretch at K10 to V206 folds into the tr-type G domain. Residues G19–T26 are G1. G19–T26 contributes to the GTP binding site. Residue T26 participates in Mg(2+) binding. Residues G62–S66 are G2. Residues D83–G86 form a G3 region. GTP-binding positions include D83 to H87 and N138 to D141. The interval N138–D141 is G4. The interval S176 to L178 is G5.

The protein belongs to the TRAFAC class translation factor GTPase superfamily. Classic translation factor GTPase family. EF-Tu/EF-1A subfamily. In terms of assembly, monomer.

Its subcellular location is the cytoplasm. It catalyses the reaction GTP + H2O = GDP + phosphate + H(+). Functionally, GTP hydrolase that promotes the GTP-dependent binding of aminoacyl-tRNA to the A-site of ribosomes during protein biosynthesis. This chain is Elongation factor Tu, found in Acidothermus cellulolyticus (strain ATCC 43068 / DSM 8971 / 11B).